The chain runs to 189 residues: Adenylate kinase (189 aa).

11-16 lines the ATP pocket; it reads GSGKGT. The segment at 31 to 60 is NMP; the sequence is STGDVLRAEIKNGTELGKTAKGYIDQGQLI. AMP-binding positions include Thr32, Arg37, 58-60, 86-89, and Gln93; these read QLI and GFPR. The LID stretch occupies residues 127 to 137; the sequence is KRGKDSGRADD. Arg128 contacts ATP. AMP-binding residues include Arg134 and Arg145. Residue Gly173 coordinates ATP.

This sequence belongs to the adenylate kinase family. As to quaternary structure, monomer.

Its subcellular location is the cytoplasm. The enzyme catalyses AMP + ATP = 2 ADP. Its pathway is purine metabolism; AMP biosynthesis via salvage pathway; AMP from ADP: step 1/1. In terms of biological role, catalyzes the reversible transfer of the terminal phosphate group between ATP and AMP. Plays an important role in cellular energy homeostasis and in adenine nucleotide metabolism. This is Adenylate kinase from Bacteroides thetaiotaomicron (strain ATCC 29148 / DSM 2079 / JCM 5827 / CCUG 10774 / NCTC 10582 / VPI-5482 / E50).